A 320-amino-acid polypeptide reads, in one-letter code: Short-chain dehydrogenase/reductase ARMGADRAFT_1169971 (320 aa).

A helical transmembrane segment spans residues 19-39; the sequence is KVAVVTGANSGIGLYILFHVA. Ile30, Asp78, Asn105, and Lys136 together coordinate NADP(+). N-linked (GlcNAc...) asparagine glycosylation is present at Asn157. Ser159 (proton donor) is an active-site residue. NADP(+) is bound by residues Tyr192, Lys196, Val227, and Ser229. The active-site Proton acceptor is the Tyr192. Lys196 acts as the Lowers pKa of active site Tyr in catalysis. Residues 235–255 traverse the membrane as a helical segment; that stretch reads LFTSLMFGTIINWVFSLFFIS.

This sequence belongs to the short-chain dehydrogenases/reductases (SDR) family.

It localises to the membrane. It functions in the pathway secondary metabolite biosynthesis. Its function is as follows. Short-chain dehydrogenase/reductase, part of the gene cluster that mediates the biosynthesis of melleolides, a range of antifungal and phytotoxic polyketide derivatives composed of an orsellinic acid (OA) moiety esterified to various sesquiterpene alcohols. The first step in melleolides biosynthesis is performed by the delta(6)-protoilludene synthase PRO1 which catalyzes the cyclization of farnesyl diphosphate to protoilludene. The orsellinic acid synthase armB produces OA by condensing acetyl-CoA with 3 malonyl-CoA units in a three-round chain elongation reaction folowed by a C2-C7 ring closure. ArmB further catalyzes the trans-esterification of OA to the various sesquiterpene alcohols resulting from the hydroxylation of protoilludene. The melleolides cluster also includes 5 cytochrome P450 monooxygenases, 4 NAD(+)-dependent oxidoreductases, one flavin-dependent oxidoreductase, and one O-methyltransferase. The cytochrome P450 monooxygenases may be involved in protoilludene hydroxylation to elaborate melleolides with multiple alcohol groups, such as melleolide D, which carries alcohol functionalities at C-4, C-5, C-10, and C-13. The role of the NAD(+)-dependent enzymes remains unknown. Numerous melleolides, including arnamial, show 5'-O-methylation of the aromatic moiety which may be catalyzed by the methyltransferase encoded in the cluster. The flavin-dependent oxidoreductase might represent the dehydrogenase yielding the aldehyde in position 1 of arnamial and other melleolides. Finally, several halogenase localized outside of the cluster, are able to catalyze the transfer of a single chlorine atom to the melleolide backbone, resulting in a 6'-chloromelleolide product. This is Short-chain dehydrogenase/reductase ARMGADRAFT_1169971 from Armillaria gallica (Bulbous honey fungus).